We begin with the raw amino-acid sequence, 87 residues long: FXYD domain-containing ion transport regulator 3 (87 aa).

The N-terminal stretch at 1-20 (MQKVTLGLLVFLAGFPVLDA) is a signal peptide. Topologically, residues 21 to 38 (NDLEDKNSPFYYDWHSLQ) are extracellular. Residues 39 to 59 (VGGLICAGVLCAMGIIIVMSA) form a helical membrane-spanning segment. The Cytoplasmic segment spans residues 60 to 87 (KCKCKFGQKSGHHPGETPPLITPGSAQS). Residues 66–87 (GQKSGHHPGETPPLITPGSAQS) are disordered.

The protein belongs to the FXYD family. Regulatory subunit of the sodium/potassium-transporting ATPase which is composed of a catalytic alpha subunit, a non-catalytic beta subunit and an additional regulatory subunit. Interacts with catalytic alpha subunit ATP1A1. Also interacts with non-catalytic beta subunit ATP1B1. Interacts with the ATP1A1-ATP1B1, ATP1A2-ATP1B1 and ATP1A3-ATP1B1 NKA isozymes. Glutathionylated. Isoform 1: Expressed mainly in differentiated cells (at protein level). Isoform 2: Expressed mainly in undifferentiated cells (at protein level).

It localises to the cell membrane. Its function is as follows. Associates with and regulates the activity of the sodium/potassium-transporting ATPase (NKA) which transports Na(+) out of the cell and K(+) into the cell. Reduces glutathionylation of the NKA beta-1 subunit ATP1B1, thus reversing glutathionylation-mediated inhibition of ATP1B1. Induces a hyperpolarization-activated chloride current when expressed in Xenopus oocytes. Decreases the apparent K+ and Na+ affinity of the sodium/potassium-transporting ATPase over a large range of membrane potentials. In terms of biological role, decreases the apparent K+ affinity of the sodium/potassium-transporting ATPase only at slightly negative and positive membrane potentials and increases the apparent Na+ affinity over a large range of membrane potentials. This is FXYD domain-containing ion transport regulator 3 (FXYD3) from Homo sapiens (Human).